The primary structure comprises 313 residues: tRNA uridine(34) hydroxylase (313 aa).

A Rhodanese domain is found at 124 to 218; sequence SDPEVLLIDT…YLEEVPQEET (95 aa). The active-site Cysteine persulfide intermediate is C178.

It belongs to the TrhO family.

It catalyses the reaction uridine(34) in tRNA + AH2 + O2 = 5-hydroxyuridine(34) in tRNA + A + H2O. Its function is as follows. Catalyzes oxygen-dependent 5-hydroxyuridine (ho5U) modification at position 34 in tRNAs. The sequence is that of tRNA uridine(34) hydroxylase from Pseudomonas fluorescens (strain Pf0-1).